We begin with the raw amino-acid sequence, 927 residues long: Echinoderm microtubule-associated protein-like 4 (927 aa).

The microtubule-binding stretch occupies residues 1–189; it reads MDGFAGSLDD…IPSDVENYDD (189 aa). Residues 14 to 63 adopt a coiled-coil conformation; sequence AASTSDVQDRLSALELRVQQQEDEITVLKAALADVLRRLAISEDQVATVR. Residues 85 to 132 form a disordered region; it reads NGGAGTRKPSHASSVAKKDTLSSAAKSVKRSSTLEKSHNSWDASEESR. Over residues 116–132 the composition is skewed to basic and acidic residues; it reads STLEKSHNSWDASEESR. WD repeat units lie at residues 199–237, 241–288, 296–336, 343–378, 385–424, 442–480, 485–521, 524–563, 567–604, 610–646, 653–692, 702–760, and 767–806; these read LKLEWVFGYRGRDCRANVYLLPTGEIVYFIASVVVLFNY, TQRH…VWDS, VIGL…VWDW, AEIKTTNEVVLAVEFHPTDAGTIVTCGKSHIFFWTW, RKQGIFGKYEKPKFVQCLAFLANGDVLAGDSGGIMLIWSK, QISKQIKAHDGSVFTLCQMRNGMLLTGGGKDRKVIMWDH, EREIEVPDQYGTIRAVAEGKGDQFLVGTSRNFILRGT, DGFQVEVQGHTDELWGLATHPFKDLLLTCAQDKQVCLWNS, SLEWTRVLDEPGHCADFHPTGTVVAIGTHSGRWFVLDA, VSIHTDGNEQLSVMRYSVDGALLAVGSHDNFIYLYNV, YSRYGKCTGHSSYITHLDWSPDNQYIMSNSGDYEILYWDI, RSEC…LFQY, and APSHKYSAHSSHVTNVSFTHNDGHLISTGGKDMSIMQWRL. Over residues 815–829 the composition is skewed to polar residues; that stretch reads NDNIAESSSAVNSPV. The disordered stretch occupies residues 815-927; the sequence is NDNIAESSSA…NQDDDDAPLS (113 aa). Over residues 914–927 the composition is skewed to acidic residues; that stretch reads AQDENQDDDDAPLS.

This sequence belongs to the WD repeat EMAP family. As to quaternary structure, homotrimer; self-association is mediated by the N-terminal coiled coil.

It is found in the cytoplasm. The protein resides in the cytoskeleton. The protein localises to the spindle. Its subcellular location is the microtubule organizing center. It localises to the midbody. Its function is as follows. Essential for the formation and stability of microtubules (MTs). Required for the organization of the mitotic spindle and for the proper attachment of kinetochores to MTs. Promotes the recruitment of NUDC to the mitotic spindle for mitotic progression. The sequence is that of Echinoderm microtubule-associated protein-like 4 (eml4) from Xenopus laevis (African clawed frog).